A 359-amino-acid chain; its full sequence is Glycerol-3-phosphate dehydrogenase [NAD(P)+] (359 aa).

Positions 11, 12, 32, and 107 each coordinate NADPH. Sn-glycerol 3-phosphate-binding residues include Lys-107 and Gly-138. Ala-142 lines the NADPH pocket. 5 residues coordinate sn-glycerol 3-phosphate: Lys-193, Asp-246, Ser-256, Arg-257, and Asn-258. The active-site Proton acceptor is Lys-193. Arg-257 provides a ligand contact to NADPH. Val-281 and Glu-283 together coordinate NADPH.

It belongs to the NAD-dependent glycerol-3-phosphate dehydrogenase family.

It is found in the cytoplasm. The enzyme catalyses sn-glycerol 3-phosphate + NAD(+) = dihydroxyacetone phosphate + NADH + H(+). It catalyses the reaction sn-glycerol 3-phosphate + NADP(+) = dihydroxyacetone phosphate + NADPH + H(+). It participates in membrane lipid metabolism; glycerophospholipid metabolism. Catalyzes the reduction of the glycolytic intermediate dihydroxyacetone phosphate (DHAP) to sn-glycerol 3-phosphate (G3P), the key precursor for phospholipid synthesis. This is Glycerol-3-phosphate dehydrogenase [NAD(P)+] from Dehalococcoides mccartyi (strain ATCC BAA-2266 / KCTC 15142 / 195) (Dehalococcoides ethenogenes (strain 195)).